We begin with the raw amino-acid sequence, 511 residues long: Maturase K (511 aa).

This sequence belongs to the intron maturase 2 family. MatK subfamily.

It localises to the plastid. The protein localises to the chloroplast. Usually encoded in the trnK tRNA gene intron. Probably assists in splicing its own and other chloroplast group II introns. In Mandragora officinarum (Mandrake), this protein is Maturase K.